Reading from the N-terminus, the 621-residue chain is F-box/LRR-repeat protein 4 (621 aa).

The residue at position 28 (Arg28) is an Asymmetric dimethylarginine. The 56-residue stretch at 277–332 (NGYFDKLPYELIQLILNHLTLPDLCRLAQTCKLLNQHCCDPLQYIHLNLQPYWAKL) folds into the F-box domain. LRR repeat units follow at residues 376–397 (ELVR…EIIS), 402–421 (NLQD…AFSH), 427–448 (GLKR…SILN), 452–474 (DLQH…ASMI), 480–501 (KLRT…AELA), 504–524 (CPLL…STGC), 532–558 (LPNL…ASNC), 559–583 (TRLR…LLES), and 584–609 (CKDL…LSAS).

In terms of assembly, part of a SCF (SKP1-CUL1-F-box) protein ligase complex. Interacts with FAF2 and VCP. Interacts with PPTC7; this interaction promotes destruction of BNIP3 and NIX and mitophagy suppression.

Its subcellular location is the cytoplasm. The protein resides in the nucleus. The protein localises to the mitochondrion outer membrane. Functionally, substrate-recognition component of the mitochondria-localized SCF-FBXL4 ubiquitin E3 ligase complex that plays a role in the restriction of mitophagy by controlling the degradation of BNIP3 and NIX mitophagy receptors. Also rescues mitochondrial injury through reverting hyperactivation of DRP1-mediated mitochondrial fission. The protein is F-box/LRR-repeat protein 4 (FBXL4) of Bos taurus (Bovine).